The following is a 373-amino-acid chain: Core trichothecene cluster (CTC) protein 14 (373 aa).

The protein belongs to the TRI14 family.

Its function is as follows. Part of the core gene cluster that mediates the biosynthesis of trichothecenes, a very large family of chemically related bicyclic sesquiterpene compounds acting as mycotoxins, including T2-toxin. The biosynthesis of trichothecenes begins with the cyclization of farnesyl diphosphate to trichodiene and is catalyzed by the trichodiene synthase TRI5. Trichodiene undergoes a series of oxygenations catalyzed by the cytochrome P450 monooxygenase TRI4. TRI4 controls the addition of four oxygens at C-2, C-3, C-11, and the C-12, C-13-epoxide to form the intermediate isotrichotriol. Isotrichotriol then undergoes a non-enzymatic isomerization and cyclization to form isotrichodermol. During this process, the oxygen at the C-2 position becomes the pyran ring oxygen and the hydroxyl group at C-11 is lost. More complex type A trichothecenes are built by modifying isotrichodermol through a series of paired hydroxylation and acetylation or acylation steps. Isotrichodermol is converted to isotrichodermin by the acetyltransferase TRI101. TRI101 encodes a C-3 transacetylase that acts as a self-protection or resistance factor during biosynthesis and that the presence of a free C-3 hydroxyl group is a key component of Fusarium trichothecene phytotoxicity. A second hydroxyl group is added to C-15 by the trichothecene C-15 hydroxylase TRI11, producing 15-decalonectrin, which is then acetylated by TRI3, producing calonectrin. A third hydroxyl group is added at C-4 by the cytochrome P450 monooxygenase TRI13, converting calonectrin to 3,15-diacetoxyspirpenol, which is subsequently acetylated bythe acetyltransferase TRI7. A fourth hydroxyl group is added to C-8 by the cytochrome P450 monooxygenase TRI1, followed by the addition of an isovaleryl moiety by TRI16. Finally, the acetyl group is removed from the C-3 position by the trichothecene C-3 esterase TRI8 to produce T-2 toxin. In Fusarium sporotrichioides, this protein is Core trichothecene cluster (CTC) protein 14.